Consider the following 92-residue polypeptide: Signal recognition particle 19 kDa protein (92 aa).

Belongs to the SRP19 family. Part of the signal recognition particle protein translocation system, which is composed of SRP and FtsY. Archaeal SRP consists of a 7S RNA molecule of 300 nucleotides and two protein subunits: SRP54 and SRP19.

The protein resides in the cytoplasm. In terms of biological role, involved in targeting and insertion of nascent membrane proteins into the cytoplasmic membrane. Binds directly to 7S RNA and mediates binding of the 54 kDa subunit of the SRP. The chain is Signal recognition particle 19 kDa protein from Halobacterium salinarum (strain ATCC 29341 / DSM 671 / R1).